A 249-amino-acid polypeptide reads, in one-letter code: Methylthioribulose-1-phosphate dehydratase (249 aa).

Zn(2+)-binding residues include His103 and His105.

This sequence belongs to the aldolase class II family. MtnB subfamily. Zn(2+) serves as cofactor.

The enzyme catalyses 5-(methylsulfanyl)-D-ribulose 1-phosphate = 5-methylsulfanyl-2,3-dioxopentyl phosphate + H2O. It functions in the pathway amino-acid biosynthesis; L-methionine biosynthesis via salvage pathway; L-methionine from S-methyl-5-thio-alpha-D-ribose 1-phosphate: step 2/6. Functionally, catalyzes the dehydration of methylthioribulose-1-phosphate (MTRu-1-P) into 2,3-diketo-5-methylthiopentyl-1-phosphate (DK-MTP-1-P). The protein is Methylthioribulose-1-phosphate dehydratase of Leptospira interrogans serogroup Icterohaemorrhagiae serovar copenhageni (strain Fiocruz L1-130).